Reading from the N-terminus, the 245-residue chain is Putative insertion sequence ATP-binding protein y4pL (245 aa).

106 to 113 lines the ATP pocket; it reads GPSGVGKS.

This sequence belongs to the IS21/IS1162 putative ATP-binding protein family.

This is Putative insertion sequence ATP-binding protein y4pL from Sinorhizobium fredii (strain NBRC 101917 / NGR234).